The sequence spans 284 residues: Sulfotransferase 4A1 (284 aa).

T8, T11, and T205 each carry phosphothreonine.

It belongs to the sulfotransferase 1 family. As to expression, expressed in brain, cerebellum and hypothalamus. Not detected in pancreas, liver, lung, intestine, kidney, uterus, adrenal gland, thymus, spleen, epididymis, testicle, and heart.

It is found in the cytoplasm. In terms of biological role, atypical sulfotransferase family member with very low affinity for 3'-phospho-5'-adenylyl sulfate (PAPS) and very low catalytic activity towards L-triiodothyronine, thyroxine, estrone, p-nitrophenol, 2-naphthylamine, and 2-beta-naphthol. May have a role in the metabolism of drugs and neurotransmitters in the CNS. This Mus musculus (Mouse) protein is Sulfotransferase 4A1 (Sult4a1).